A 197-amino-acid chain; its full sequence is FMN-dependent NADH:quinone oxidoreductase (197 aa).

FMN-binding positions include Ser-10 and Ser-16–Ser-18.

Belongs to the azoreductase type 1 family. As to quaternary structure, homodimer. FMN serves as cofactor.

It carries out the reaction 2 a quinone + NADH + H(+) = 2 a 1,4-benzosemiquinone + NAD(+). It catalyses the reaction N,N-dimethyl-1,4-phenylenediamine + anthranilate + 2 NAD(+) = 2-(4-dimethylaminophenyl)diazenylbenzoate + 2 NADH + 2 H(+). Quinone reductase that provides resistance to thiol-specific stress caused by electrophilic quinones. Functionally, also exhibits azoreductase activity. Catalyzes the reductive cleavage of the azo bond in aromatic azo compounds to the corresponding amines. The protein is FMN-dependent NADH:quinone oxidoreductase of Erythrobacter litoralis (strain HTCC2594).